Reading from the N-terminus, the 419-residue chain is UDP-N-acetylglucosamine 1-carboxyvinyltransferase (419 aa).

22–23 (KN) serves as a coordination point for phosphoenolpyruvate. Arginine 95 is a UDP-N-acetyl-alpha-D-glucosamine binding site. Cysteine 119 acts as the Proton donor in catalysis. The residue at position 119 (cysteine 119) is a 2-(S-cysteinyl)pyruvic acid O-phosphothioketal. UDP-N-acetyl-alpha-D-glucosamine is bound by residues 164–167 (KVSV), aspartate 308, and isoleucine 330.

The protein belongs to the EPSP synthase family. MurA subfamily.

It localises to the cytoplasm. The catalysed reaction is phosphoenolpyruvate + UDP-N-acetyl-alpha-D-glucosamine = UDP-N-acetyl-3-O-(1-carboxyvinyl)-alpha-D-glucosamine + phosphate. It functions in the pathway cell wall biogenesis; peptidoglycan biosynthesis. Its function is as follows. Cell wall formation. Adds enolpyruvyl to UDP-N-acetylglucosamine. This chain is UDP-N-acetylglucosamine 1-carboxyvinyltransferase, found in Rickettsia conorii (strain ATCC VR-613 / Malish 7).